Consider the following 318-residue polypeptide: Malate dehydrogenase (318 aa).

Residues 10 to 15 (GGGQIG) and aspartate 34 each bind NAD(+). Substrate contacts are provided by arginine 83 and arginine 89. NAD(+)-binding positions include asparagine 96 and 119 to 121 (ISN). The substrate site is built by asparagine 121 and arginine 152. Histidine 176 functions as the Proton acceptor in the catalytic mechanism.

Belongs to the LDH/MDH superfamily. MDH type 3 family.

It carries out the reaction (S)-malate + NAD(+) = oxaloacetate + NADH + H(+). Functionally, catalyzes the reversible oxidation of malate to oxaloacetate. This is Malate dehydrogenase from Geotalea uraniireducens (strain Rf4) (Geobacter uraniireducens).